We begin with the raw amino-acid sequence, 475 residues long: tRNA-dihydrouridine(16/17) synthase [NAD(P)(+)]-like (475 aa).

FMN is bound by residues P23 to V25 and Q79. Catalysis depends on C108, which acts as the Proton donor. FMN is bound by residues K147, H175, N208–N210, and A232–E233. Residues G343–P388 are disordered. Positions N373 to H383 are enriched in basic residues.

It belongs to the Dus family. Dus1 subfamily. It depends on FMN as a cofactor.

Its subcellular location is the cytoplasm. The protein localises to the nucleus. It catalyses the reaction 5,6-dihydrouridine(16) in tRNA + NADP(+) = uridine(16) in tRNA + NADPH + H(+). The enzyme catalyses 5,6-dihydrouridine(16) in tRNA + NAD(+) = uridine(16) in tRNA + NADH + H(+). The catalysed reaction is 5,6-dihydrouridine(17) in tRNA + NAD(+) = uridine(17) in tRNA + NADH + H(+). It carries out the reaction 5,6-dihydrouridine(17) in tRNA + NADP(+) = uridine(17) in tRNA + NADPH + H(+). Catalyzes the synthesis of dihydrouridine, a modified base found in the D-loop of most tRNAs. Specifically modifies U16 and U17 in cytoplasmic tRNAs. Affects the level of some mature tRNA and thereby the total cellular translation. The protein is tRNA-dihydrouridine(16/17) synthase [NAD(P)(+)]-like (Dus1l) of Mus musculus (Mouse).